A 357-amino-acid polypeptide reads, in one-letter code: Homoarginine-6-hydroxylase 2-ODD-C23.2 (357 aa).

Residues 208–308 (PFWVMRIIGY…RVCVAFFYET (101 aa)) enclose the Fe2OG dioxygenase domain. Fe cation contacts are provided by His-231, Asp-233, and His-289. Arg-299 lines the 2-oxoglutarate pocket.

The protein belongs to the iron/ascorbate-dependent oxidoreductase family. Fe(2+) is required as a cofactor. Expressed in senescent leaves.

Its subcellular location is the cytoplasm. The protein localises to the cytosol. The catalysed reaction is L-homoarginine + 2-oxoglutarate + O2 = 6-hydroxy-L-homoarginine + succinate + CO2. The enzyme catalyses L-arginine + 2-oxoglutarate + O2 = 5-hydroxy-L-arginine + succinate + CO2. Its activity is regulated as follows. Slightly inhibited by canavanine (Can), the 5-oxa-analog of arginine. Functionally, 2-oxoglutarate-dependent dioxygenase catalyzing homoarginine 6-hydroxylation and arginine-5-hydroxylation thus producing 6-hydroxy-L-homoarginine and 5-hydroxy-L-arginine, respectively. Guanidine (Gd) is in turn synthesized by the spontaneous conversion of 6-hydroxy-L-homoarginine and 5-hydroxy-L-arginine to (S)-2-amino-6-oxohexanoate (RHEA:79843) and L-glutamate 5-semialdehyde (RHEA:31527); guanidine is a nitrogen-rich compound that may serve as a defense or signaling substance. The chain is Homoarginine-6-hydroxylase 2-ODD-C23.2 from Arabidopsis thaliana (Mouse-ear cress).